The following is a 125-amino-acid chain: Oxytocin-neurophysin 1 (125 aa).

The N-terminal stretch at 1 to 19 (MACPSLACCLLGLLALTSA) is a signal peptide. C20 and C25 are disulfide-bonded. G28 is subject to Glycine amide. Cystine bridges form between C41-C85, C44-C58, C52-C75, C59-C65, C92-C104, C98-C116, and C105-C110.

This sequence belongs to the vasopressin/oxytocin family. In terms of assembly, interacts with oxytocin receptor (Ki=1.5 nM). Interacts with vasopressin V1aR/AVPR1A (Ki=37 nM), V1bR/AVPR1B (Ki=222 nM), and V2R/AVPR2 receptors (Ki=823 nM).

Its function is as follows. Neurophysin 1 specifically binds oxytocin. In terms of biological role, oxytocin causes contraction of the smooth muscle of the uterus and of the mammary gland. Acts by binding to oxytocin receptor (OXTR). This chain is Oxytocin-neurophysin 1 (Oxt), found in Rattus norvegicus (Rat).